A 158-amino-acid chain; its full sequence is Low molecular weight phosphotyrosine protein phosphatase (158 aa).

At A2 the chain carries N-acetylalanine. C13 acts as the Nucleophile in catalysis. The active site involves R19. D130 serves as the catalytic Proton donor. Residues Y132 and Y133 each carry the phosphotyrosine modification.

This sequence belongs to the low molecular weight phosphotyrosine protein phosphatase family. Interacts with EPHA2; dephosphorylates EPHA2. Interacts with EPHB1. As to quaternary structure, interacts with the SH3 domain of SPTAN1. There is no interaction observed for isoform 2. Post-translationally, phosphorylated by LCK. Phosphorylation at Tyr-132 increases its phosphatase activity.

It is found in the cytoplasm. It carries out the reaction O-phospho-L-tyrosyl-[protein] + H2O = L-tyrosyl-[protein] + phosphate. The enzyme catalyses a phosphate monoester + H2O = an alcohol + phosphate. Its activity is regulated as follows. Inhibited by sulfhydryl reagents. Functionally, acts on tyrosine phosphorylated proteins, low-MW aryl phosphates and natural and synthetic acyl phosphates with differences in substrate specificity between isoform 1 and isoform 2. This Rattus norvegicus (Rat) protein is Low molecular weight phosphotyrosine protein phosphatase.